A 313-amino-acid polypeptide reads, in one-letter code: Glycine--tRNA ligase alpha subunit (313 aa).

This sequence belongs to the class-II aminoacyl-tRNA synthetase family. As to quaternary structure, tetramer of two alpha and two beta subunits.

The protein resides in the cytoplasm. The catalysed reaction is tRNA(Gly) + glycine + ATP = glycyl-tRNA(Gly) + AMP + diphosphate. The chain is Glycine--tRNA ligase alpha subunit from Leuconostoc mesenteroides subsp. mesenteroides (strain ATCC 8293 / DSM 20343 / BCRC 11652 / CCM 1803 / JCM 6124 / NCDO 523 / NBRC 100496 / NCIMB 8023 / NCTC 12954 / NRRL B-1118 / 37Y).